We begin with the raw amino-acid sequence, 726 residues long: Probable pre-mRNA-splicing factor ATP-dependent RNA helicase DEAH2 (726 aa).

One can recognise a Helicase ATP-binding domain in the interval Leu71 to Pro240. Gly84–Thr91 lines the ATP pocket. Positions Asp187–His190 match the DEAH box motif. The region spanning Thr265–Gly445 is the Helicase C-terminal domain.

Belongs to the DEAD box helicase family. DEAH subfamily. PRP43 sub-subfamily.

It carries out the reaction ATP + H2O = ADP + phosphate + H(+). Its function is as follows. May be involved in pre-mRNA splicing. The chain is Probable pre-mRNA-splicing factor ATP-dependent RNA helicase DEAH2 from Arabidopsis thaliana (Mouse-ear cress).